Here is an 89-residue protein sequence, read N- to C-terminus: Small ribosomal subunit protein bS20 (89 aa).

The interval Met-1–Met-28 is disordered.

It belongs to the bacterial ribosomal protein bS20 family.

In terms of biological role, binds directly to 16S ribosomal RNA. This is Small ribosomal subunit protein bS20 from Koribacter versatilis (strain Ellin345).